We begin with the raw amino-acid sequence, 484 residues long: Diaminopimelate decarboxylase 1, chloroplastic (484 aa).

Over residues 1-28 (MAAATQFLSQPSSLNPHQLKNQTSQRSR) the composition is skewed to polar residues. A disordered region spans residues 1-30 (MAAATQFLSQPSSLNPHQLKNQTSQRSRSI). Residues 1 to 49 (MAAATQFLSQPSSLNPHQLKNQTSQRSRSIPVLSLKSTLKPLKRLSVKA) constitute a chloroplast transit peptide. Position 50 is an N-acetylalanine (alanine 50). Lysine 125 bears the N6-(pyridoxal phosphate)lysine mark. Pyridoxal 5'-phosphate contacts are provided by residues glycine 304 and 340 to 343 (EPGR). 3 residues coordinate substrate: arginine 343, arginine 379, and tyrosine 383. Cysteine 411 (proton donor) is an active-site residue. Glutamate 412 and tyrosine 440 together coordinate substrate. Tyrosine 440 lines the pyridoxal 5'-phosphate pocket.

This sequence belongs to the Orn/Lys/Arg decarboxylase class-II family. LysA subfamily. In terms of assembly, homodimer. Pyridoxal 5'-phosphate is required as a cofactor.

It localises to the plastid. The protein localises to the chloroplast. It carries out the reaction meso-2,6-diaminopimelate + H(+) = L-lysine + CO2. Its pathway is amino-acid biosynthesis; L-lysine biosynthesis via DAP pathway; L-lysine from DL-2,6-diaminopimelate: step 1/1. In terms of biological role, specifically catalyzes the decarboxylation of meso-diaminopimelate (meso-DAP) to L-lysine. The polypeptide is Diaminopimelate decarboxylase 1, chloroplastic (LYSA1) (Arabidopsis thaliana (Mouse-ear cress)).